The sequence spans 72 residues: Translation initiation factor IF-1 (72 aa).

Residues 1-72 (MAREDHIEME…SKGRIVYRAR (72 aa)) form the S1-like domain.

This sequence belongs to the IF-1 family. As to quaternary structure, component of the 30S ribosomal translation pre-initiation complex which assembles on the 30S ribosome in the order IF-2 and IF-3, IF-1 and N-formylmethionyl-tRNA(fMet); mRNA recruitment can occur at any time during PIC assembly.

It localises to the cytoplasm. Functionally, one of the essential components for the initiation of protein synthesis. Stabilizes the binding of IF-2 and IF-3 on the 30S subunit to which N-formylmethionyl-tRNA(fMet) subsequently binds. Helps modulate mRNA selection, yielding the 30S pre-initiation complex (PIC). Upon addition of the 50S ribosomal subunit IF-1, IF-2 and IF-3 are released leaving the mature 70S translation initiation complex. This chain is Translation initiation factor IF-1, found in Chromohalobacter salexigens (strain ATCC BAA-138 / DSM 3043 / CIP 106854 / NCIMB 13768 / 1H11).